The following is a 462-amino-acid chain: Cysteine--tRNA ligase (462 aa).

Cys-24 lines the Zn(2+) pocket. A 'HIGH' region motif is present at residues 26–36; that stretch reads PTVYDDAHLGH. 3 residues coordinate Zn(2+): Cys-199, His-224, and Glu-228. The 'KMSKS' region motif lies at 256–260; the sequence is KMSKS. Lys-259 contributes to the ATP binding site.

This sequence belongs to the class-I aminoacyl-tRNA synthetase family. Monomer. Zn(2+) is required as a cofactor.

The protein resides in the cytoplasm. The enzyme catalyses tRNA(Cys) + L-cysteine + ATP = L-cysteinyl-tRNA(Cys) + AMP + diphosphate. The protein is Cysteine--tRNA ligase of Campylobacter jejuni subsp. jejuni serotype O:23/36 (strain 81-176).